Consider the following 686-residue polypeptide: Amyloid-beta-like protein (686 aa).

Residues methionine 1–alanine 21 form the signal peptide. At glutamate 22–glutamine 621 the chain is on the extracellular side. The interval glutamate 32–histidine 125 is GFLD subdomain. The E1 domain maps to glutamate 32 to asparagine 197. 6 disulfides stabilise this stretch: cysteine 42–cysteine 65, cysteine 76–cysteine 119, cysteine 101–cysteine 108, cysteine 135–cysteine 195, cysteine 146–cysteine 182, and cysteine 160–cysteine 194. Asparagine 84 is a glycosylation site (N-linked (GlcNAc...) asparagine). Residues histidine 133–asparagine 197 are cuBD subdomain. The N-linked (GlcNAc...) asparagine glycan is linked to asparagine 201. The interval asparagine 201–phenylalanine 245 is disordered. Residues aspartate 211–serine 239 show a composition bias toward acidic residues. In terms of domain architecture, E2 spans serine 240–tyrosine 440. N-linked (GlcNAc...) asparagine glycosylation is present at asparagine 249. Heparin contacts are provided by residues asparagine 252–aspartate 255 and histidine 382. N-linked (GlcNAc...) asparagine glycosylation is present at asparagine 417. 2 disordered regions span residues proline 479–lysine 526 and lysine 550–glutamate 585. Residues serine 500–glutamate 516 are compositionally biased toward acidic residues. Positions glutamine 517 to lysine 526 are enriched in basic and acidic residues. The span at threonine 558–serine 567 shows a compositional bias: acidic residues. A helical membrane pass occupies residues proline 622–threonine 642. The Cytoplasmic portion of the chain corresponds to asparagine 643–alanine 686. Positions tyrosine 674–tyrosine 679 match the YENPXY motif motif.

This sequence belongs to the APP family. Interacts (via cytoplasmic domain) with feh-1 (via PID 2 domain). In terms of processing, extracellular region is proteolytically cleaved. In terms of tissue distribution, expressed in the head, pharynx, spermatheca, uterus, vulva, tail and ventral neurons. Specifically expressed in nerve ring interneurons, the ventral cord, socket and amphids in the head, with strong expression in junctional cells, including the pharyngeal intestinal valve and uterine seam junction, and the excretory cell and weak expression in epidermal epithelial cells, including hyp7 cells, vulval cells, rectal valve cells, pharyngeal arcade cells and the tail hypodermis.

The protein localises to the membrane. It is found in the early endosome. Its function is as follows. Required for normal developmental progression throughout all life stages. Specifically required for the molt stage during all larval transitions and morphogenesis. Acts with heterochronic genes, including members of the let-7 family, to regulate larval stage to adult transition. Acts synergistically with acn-1 in let-7 regulated postembryonic cell division of hypodermal seam cells. Acts in multiple pathways to influence daf-12 and daf-16 activity to in turn regulate physiological and reproductive processes such as body size and egg-laying. May play a role in neurotransmission. The chain is Amyloid-beta-like protein from Caenorhabditis elegans.